The following is a 309-amino-acid chain: Maintenance of mitochondrial morphology protein 1 (309 aa).

The Lumenal segment spans residues 1 to 16; the sequence is MGNAYIFSLQPTFTQG. Residues 17 to 37 form a helical membrane-spanning segment; the sequence is LILGQFSILFLLVLVLKYLFF. The Cytoplasmic segment spans residues 38–309; that stretch reads DTVSDHAYRT…EQQAGELPVN (272 aa). Residues 84-293 enclose the SMP-LTD domain; the sequence is ECESADWLNA…LPGLASVSEV (210 aa).

This sequence belongs to the MMM1 family. Homodimer. Component of the ER-mitochondria encounter structure (ERMES) or MDM complex, composed of MMM1, MDM10, MDM12 and MDM34. An MMM1 homodimer associates with one molecule of MDM12 on each side in a pairwise head-to-tail manner, and the SMP-LTD domains of MMM1 and MDM12 generate a continuous hydrophobic tunnel for phospholipid trafficking.

Its subcellular location is the endoplasmic reticulum membrane. Functionally, component of the ERMES/MDM complex, which serves as a molecular tether to connect the endoplasmic reticulum (ER) and mitochondria. Components of this complex are involved in the control of mitochondrial shape and protein biogenesis, and function in nonvesicular lipid trafficking between the ER and mitochondria. The MDM12-MMM1 subcomplex functions in the major beta-barrel assembly pathway that is responsible for biogenesis of all outer membrane beta-barrel proteins, and acts in a late step after the SAM complex. The MDM10-MDM12-MMM1 subcomplex further acts in the TOM40-specific pathway after the action of the MDM12-MMM1 complex. Essential for establishing and maintaining the structure of mitochondria and maintenance of mtDNA nucleoids. The sequence is that of Maintenance of mitochondrial morphology protein 1 from Postia placenta (strain ATCC 44394 / Madison 698-R) (Brown rot fungus).